We begin with the raw amino-acid sequence, 209 residues long: Thiamine-phosphate synthase (209 aa).

4-amino-2-methyl-5-(diphosphooxymethyl)pyrimidine-binding positions include 38-42 (QLREK) and N70. D71 and D90 together coordinate Mg(2+). S109 provides a ligand contact to 4-amino-2-methyl-5-(diphosphooxymethyl)pyrimidine. 135–137 (TPT) provides a ligand contact to 2-[(2R,5Z)-2-carboxy-4-methylthiazol-5(2H)-ylidene]ethyl phosphate. Residue K138 participates in 4-amino-2-methyl-5-(diphosphooxymethyl)pyrimidine binding. 2-[(2R,5Z)-2-carboxy-4-methylthiazol-5(2H)-ylidene]ethyl phosphate is bound by residues G166 and 186–187 (IS).

Belongs to the thiamine-phosphate synthase family. Requires Mg(2+) as cofactor.

It catalyses the reaction 2-[(2R,5Z)-2-carboxy-4-methylthiazol-5(2H)-ylidene]ethyl phosphate + 4-amino-2-methyl-5-(diphosphooxymethyl)pyrimidine + 2 H(+) = thiamine phosphate + CO2 + diphosphate. The catalysed reaction is 2-(2-carboxy-4-methylthiazol-5-yl)ethyl phosphate + 4-amino-2-methyl-5-(diphosphooxymethyl)pyrimidine + 2 H(+) = thiamine phosphate + CO2 + diphosphate. It carries out the reaction 4-methyl-5-(2-phosphooxyethyl)-thiazole + 4-amino-2-methyl-5-(diphosphooxymethyl)pyrimidine + H(+) = thiamine phosphate + diphosphate. It functions in the pathway cofactor biosynthesis; thiamine diphosphate biosynthesis; thiamine phosphate from 4-amino-2-methyl-5-diphosphomethylpyrimidine and 4-methyl-5-(2-phosphoethyl)-thiazole: step 1/1. Condenses 4-methyl-5-(beta-hydroxyethyl)thiazole monophosphate (THZ-P) and 2-methyl-4-amino-5-hydroxymethyl pyrimidine pyrophosphate (HMP-PP) to form thiamine monophosphate (TMP). The protein is Thiamine-phosphate synthase of Syntrophomonas wolfei subsp. wolfei (strain DSM 2245B / Goettingen).